The primary structure comprises 292 residues: 4-hydroxybenzoate octaprenyltransferase (292 aa).

The next 8 helical transmembrane spans lie at 23 to 43 (PIGI…AGEG), 47 to 67 (PGVA…GCVI), 98 to 118 (LILF…MNWL), 141 to 161 (HLPQ…TFAA), 164 to 184 (GSIP…ALIY), 211 to 231 (YDRE…AGIG), 233 to 253 (YLGL…FSVY), and 270 to 290 (FLNN…DYLW).

Belongs to the UbiA prenyltransferase family. Requires Mg(2+) as cofactor.

It localises to the cell inner membrane. It carries out the reaction all-trans-octaprenyl diphosphate + 4-hydroxybenzoate = 4-hydroxy-3-(all-trans-octaprenyl)benzoate + diphosphate. It functions in the pathway cofactor biosynthesis; ubiquinone biosynthesis. Its function is as follows. Catalyzes the prenylation of para-hydroxybenzoate (PHB) with an all-trans polyprenyl group. Mediates the second step in the final reaction sequence of ubiquinone-8 (UQ-8) biosynthesis, which is the condensation of the polyisoprenoid side chain with PHB, generating the first membrane-bound Q intermediate 3-octaprenyl-4-hydroxybenzoate. The polypeptide is 4-hydroxybenzoate octaprenyltransferase (Methylococcus capsulatus (strain ATCC 33009 / NCIMB 11132 / Bath)).